Consider the following 273-residue polypeptide: NADPH-dependent 7-cyano-7-deazaguanine reductase (273 aa).

Residue 81–83 participates in substrate binding; it reads VES. 83 to 84 is an NADPH binding site; sequence SK. C179 serves as the catalytic Thioimide intermediate. The active-site Proton donor is the D186. 218–219 provides a ligand contact to substrate; it reads AE. 247-248 contacts NADPH; it reads RG.

This sequence belongs to the GTP cyclohydrolase I family. QueF type 2 subfamily. In terms of assembly, homodimer.

It localises to the cytoplasm. It catalyses the reaction 7-aminomethyl-7-carbaguanine + 2 NADP(+) = 7-cyano-7-deazaguanine + 2 NADPH + 3 H(+). The protein operates within tRNA modification; tRNA-queuosine biosynthesis. Catalyzes the NADPH-dependent reduction of 7-cyano-7-deazaguanine (preQ0) to 7-aminomethyl-7-deazaguanine (preQ1). The sequence is that of NADPH-dependent 7-cyano-7-deazaguanine reductase from Rickettsia bellii (strain OSU 85-389).